We begin with the raw amino-acid sequence, 107 residues long: Nucleoid-associated protein PPA0205 (107 aa).

The protein belongs to the YbaB/EbfC family. In terms of assembly, homodimer.

The protein resides in the cytoplasm. It is found in the nucleoid. Its function is as follows. Binds to DNA and alters its conformation. May be involved in regulation of gene expression, nucleoid organization and DNA protection. The protein is Nucleoid-associated protein PPA0205 of Cutibacterium acnes (strain DSM 16379 / KPA171202) (Propionibacterium acnes).